We begin with the raw amino-acid sequence, 317 residues long: MKKISLTLLILLLALTAAACGSKNESTASKASGTASEKKKIEYLDKTYEVTVPTDKIAITGSVESMEDAKLLDVHPQGAISFSGKFPDMFKDITDKAEPTGEKMEPNIEKILEMKPDVILASTKFPEKTLQKISTAGTTIPVSHISSNWKENMMLLAQLTGKEKKAKKIIADYEQDLKEIKTKINDKAKDSKALVIRIRQGNIYIYPEQVYFNSTLYGDLGLKAPNEVKAAKAQELSSLEKLSEMNPDHIFVQFSDDENADKPDALKDLEKNPIWKSLKAVKEDHVYVNSVDPLAQGGTAWSKVRFLKAAAEKLTQN.

The first 19 residues, 1–19 (MKKISLTLLILLLALTAAA), serve as a signal peptide directing secretion. Cys20 carries the N-palmitoyl cysteine lipid modification. Cys20 carries S-diacylglycerol cysteine lipidation. The Fe/B12 periplasmic-binding domain occupies 57 to 317 (IAITGSVESM…KAAAEKLTQN (261 aa)).

It belongs to the bacterial solute-binding protein 8 family. In terms of assembly, the complex is composed of one ATP-binding protein (YusV), two transmembrane proteins (FeuB and FeuC) and a solute-binding protein (FeuA).

The protein resides in the cell membrane. It localises to the cytoplasm. Its subcellular location is the membrane raft. Functionally, involved in the uptake of iron. In terms of biological role, part of the ABC transporter complex FeuABC/YusV involved in import of the catecholate siderophores bacillibactin and enterobactin. In Bacillus subtilis (strain 168), this protein is Iron-uptake system-binding protein (feuA).